A 1241-amino-acid polypeptide reads, in one-letter code: RNA polymerase II C-terminal domain phosphatase-like 3 (1241 aa).

Disordered regions lie at residues Asp-361–Gly-402, Val-428–Tyr-470, Ile-505–Arg-525, Lys-578–Asp-598, Ala-677–Pro-702, Val-720–Thr-800, and Thr-852–Arg-885. The segment covering Pro-368–Leu-378 has biased composition (polar residues). Residues Gly-441 to Ser-466 show a composition bias toward low complexity. A compositionally biased stretch (basic and acidic residues) spans Ala-677–Arg-686. Composition is skewed to polar residues over residues Pro-691 to Pro-702 and Pro-791 to Thr-800. The span at Ser-871–Ala-881 shows a compositional bias: low complexity. Residues Phe-923–Leu-1103 enclose the FCP1 homology domain. Residues Glu-1146–Ile-1239 enclose the BRCT domain.

Interacts with RAP74. It depends on Mg(2+) as a cofactor. Co(2+) is required as a cofactor. The cofactor is Mn(2+).

The protein localises to the nucleus. It catalyses the reaction O-phospho-L-seryl-[protein] + H2O = L-seryl-[protein] + phosphate. The catalysed reaction is O-phospho-L-threonyl-[protein] + H2O = L-threonyl-[protein] + phosphate. In terms of biological role, completely dephosphorylates 'Ser-2', and partially 'Ser-5' and 'Ser-7' of the heptad repeats YSPTSPS in the C-terminal domain (CTD) of the largest RNA polymerase II subunit (RPB1). Involved in defense response. Acts as a negative regulator of immune gene expression and immunity to pathogen infections. Preferentially dephosphorylates 'Ser-2' of RNA polymerase II CTD. This counterregulates the MAP kinase (MAPK) or cyclin-dependent kinase C (CDKC)-mediated phosphorylation of CTD in response to pathogens and upon perception of microbe-associated molecular patterns (MAMPs). MAPKs phosphorylate and activate CDKCs, which are CTD kinases that positively regulate plant innate immunity. Acts as a negative regulator of stress gene transcription involved in abscisic acid (ABA) mediated signaling pathway and cold resistance. Acts as a post-transcriptional gene silencing (PTGS) suppressor. The protein is RNA polymerase II C-terminal domain phosphatase-like 3 of Arabidopsis thaliana (Mouse-ear cress).